The sequence spans 122 residues: Large ribosomal subunit protein uL14 (122 aa).

The protein belongs to the universal ribosomal protein uL14 family. In terms of assembly, part of the 50S ribosomal subunit. Forms a cluster with proteins L3 and L19. In the 70S ribosome, L14 and L19 interact and together make contacts with the 16S rRNA in bridges B5 and B8.

Binds to 23S rRNA. Forms part of two intersubunit bridges in the 70S ribosome. This chain is Large ribosomal subunit protein uL14, found in Alkaliphilus oremlandii (strain OhILAs) (Clostridium oremlandii (strain OhILAs)).